Here is a 773-residue protein sequence, read N- to C-terminus: ATP-dependent zinc metalloprotease YME1L1 (773 aa).

Topologically, residues 1-295 (MFSLSSTVQP…TNDSLRRTRL (295 aa)) are mitochondrial matrix. Residues 296 to 316 (ILFVLLLFGIYGLLKNPFLSV) form a helical membrane-spanning segment. The Mitochondrial intermembrane portion of the chain corresponds to 317–773 (RFRTTTGLDS…VLEGKKLEVR (457 aa)). 6 residues coordinate ATP: Val341, Thr383, Gly384, Lys385, Thr386, and Leu387. Zn(2+) is bound at residue His599. The active site involves Glu600. Residues His603 and Asp677 each contribute to the Zn(2+) site.

The protein in the N-terminal section; belongs to the AAA ATPase family. In the C-terminal section; belongs to the peptidase M41 family. In terms of assembly, homohexamer; may also form heterohexamers. Exists in several complexes of 600-1100 kDa. Interacts with AFG1L. It depends on Zn(2+) as a cofactor. Post-translationally, proteolytically processed by mitochondrial processing peptidase (MPP) to generate the mature form. Degraded in an OMA1-dependent manner in response to oxidative stress. In terms of tissue distribution, high expression in cardiac and skeletal muscle mitochondria.

The protein localises to the mitochondrion inner membrane. Its subcellular location is the mitochondrion. It catalyses the reaction ATP + H2O = ADP + phosphate + H(+). ATP-dependent metalloprotease that catalyzes the degradation of folded and unfolded proteins with a suitable degron sequence in the mitochondrial intermembrane region. Plays an important role in regulating mitochondrial morphology and function by cleaving OPA1 at position S2, giving rise to a form of OPA1 that promotes maintenance of normal mitochondrial structure and mitochondrial protein metabolism. Ensures cell proliferation, maintains normal cristae morphology and complex I respiration activity, promotes antiapoptotic activity and protects mitochondria from the accumulation of oxidatively damaged membrane proteins. Required to control the accumulation of nonassembled respiratory chain subunits (NDUFB6, OX4 and ND1). Involved in the mitochondrial adaptation in response to various signals, such as stress or developmental cues, by mediating degradation of mitochondrial proteins to rewire the mitochondrial proteome. Catalyzes degradation of mitochondrial proteins, such as translocases, lipid transfer proteins and metabolic enzymes in response to nutrient starvation in order to limit mitochondrial biogenesis: mechanistically, YME1L is activated by decreased phosphatidylethanolamine levels caused by LPIN1 activity in response to mTORC1 inhibition. Acts as a regulator of adult neural stem cell self-renewal by promoting mitochondrial proteome rewiring, preserving neural stem and progenitor cells self-renewal. Required for normal, constitutive degradation of PRELID1. Catalyzes the degradation of OMA1 in response to membrane depolarization. Mediates degradation of TIMM17A downstream of the integrated stress response (ISR). Catalyzes degradation of MICU1 when MICU1 is not assembled via an interchain disulfide. The sequence is that of ATP-dependent zinc metalloprotease YME1L1 (YME1L1) from Homo sapiens (Human).